The chain runs to 210 residues: Eukaryotic translation initiation factor 2 subunit gamma (210 aa).

In terms of domain architecture, tr-type G spans 1–196 (IGHVAHGKST…HLVETITPPR (196 aa)). Residues 2 to 9 (GHVAHGKS) form a G1 region. Residue 5-10 (AHGKST) participates in GTP binding. The tract at residues 30–34 (NITIK) is G2. The tract at residues 85 to 88 (DCPG) is G3. GTP-binding positions include 141–144 (NKID) and 174–176 (SAI). A G4 region spans residues 141–144 (NKID). Residues 174–176 (SAI) form a G5 region.

Belongs to the TRAFAC class translation factor GTPase superfamily. Classic translation factor GTPase family. EIF2G subfamily. As to quaternary structure, eukaryotic translation initiation factor 2 eIF2 is a heterotrimeric complex composed of an alpha, a beta and a gamma subunit. The factors eIF-1, eIF-2, eIF-3, TIF5/eIF-5 and methionyl-tRNAi form a multifactor complex (MFC) that may bind to the 40S ribosome.

The protein localises to the cytoplasm. It is found in the cytosol. It carries out the reaction GTP + H2O = GDP + phosphate + H(+). As a subunit of eukaryotic initiation factor 2 eIF2, involved in the early steps of protein synthesis. In the presence of GTP, eIF-2 forms a ternary complex with initiator tRNA Met-tRNAi and then recruits the 40S ribosomal complex and initiation factors eIF-1, eIF-1A and eIF-3 to form the 43S pre-initiation complex (43S PIC), a step that determines the rate of protein translation. The 43S PIC binds to mRNA and scans downstream to the initiation codon, where it forms a 48S initiation complex by codon-anticodon base pairing. This leads to the displacement of eIF-1 to allow GTPase-activating protein (GAP) eIF-5-mediated hydrolysis of eIF2-bound GTP. Hydrolysis of GTP and release of Pi, which makes GTP hydrolysis irreversible, causes the release of the eIF-2-GDP binary complex from the 40S subunit, an event that is essential for the subsequent joining of the 60S ribosomal subunit to form an elongation-competent 80S ribosome. In order for eIF-2 to recycle and catalyze another round of initiation, the GDP bound to eIF-2 must be exchanged with GTP by way of a reaction catalyzed by GDP-GTP exchange factor (GEF) eIF-2B. The protein is Eukaryotic translation initiation factor 2 subunit gamma of Spironucleus vortens.